The following is a 518-amino-acid chain: Membrane-bound lytic murein transglycosylase F (518 aa).

The signal sequence occupies residues 1–21 (MKKLKINYLFIGILALLLAVA). A non-LT domain region spans residues 22 to 269 (LWPSIPWFGK…RIEEKYLGHG (248 aa)). The tract at residues 270–518 (DDFDYVDTRT…SRKGSEEKQN (249 aa)) is LT domain. Glu314 is a catalytic residue.

It in the N-terminal section; belongs to the bacterial solute-binding protein 3 family. In the C-terminal section; belongs to the transglycosylase Slt family.

It localises to the cell outer membrane. It catalyses the reaction Exolytic cleavage of the (1-&gt;4)-beta-glycosidic linkage between N-acetylmuramic acid (MurNAc) and N-acetylglucosamine (GlcNAc) residues in peptidoglycan, from either the reducing or the non-reducing ends of the peptidoglycan chains, with concomitant formation of a 1,6-anhydrobond in the MurNAc residue.. In terms of biological role, murein-degrading enzyme that degrades murein glycan strands and insoluble, high-molecular weight murein sacculi, with the concomitant formation of a 1,6-anhydromuramoyl product. Lytic transglycosylases (LTs) play an integral role in the metabolism of the peptidoglycan (PG) sacculus. Their lytic action creates space within the PG sacculus to allow for its expansion as well as for the insertion of various structures such as secretion systems and flagella. This is Membrane-bound lytic murein transglycosylase F from Escherichia coli (strain SMS-3-5 / SECEC).